Consider the following 548-residue polypeptide: Probable malate:quinone oxidoreductase (548 aa).

The interval 521–548 (DKPQAADSTPKPQLKPQPVQKEVADIAL) is disordered. The span at 530 to 541 (PKPQLKPQPVQK) shows a compositional bias: low complexity.

This sequence belongs to the MQO family. FAD serves as cofactor.

The catalysed reaction is (S)-malate + a quinone = a quinol + oxaloacetate. Its pathway is carbohydrate metabolism; tricarboxylic acid cycle; oxaloacetate from (S)-malate (quinone route): step 1/1. The chain is Probable malate:quinone oxidoreductase from Escherichia coli (strain 55989 / EAEC).